We begin with the raw amino-acid sequence, 164 residues long: Protein phosphatase 1 regulatory subunit 14C (164 aa).

Positions 1–19 (MSVVTGGGEAAGGGGGGGA) are enriched in gly residues. The disordered stretch occupies residues 1–70 (MSVVTGGGEA…QQQRRHQQGK (70 aa)). An N-acetylserine modification is found at serine 2. Serine 25 carries the phosphoserine modification. Arginine 27 bears the Omega-N-methylarginine mark. Serine 33 is subject to Phosphoserine. Positions 50 to 62 (VTTVAAAGQVQQQ) are enriched in low complexity. At threonine 72 the chain carries Phosphothreonine; by ILK1.

Belongs to the PP1 inhibitor family. The main inhibitory site appears to be Thr-72. Has over 600-fold higher inhibitory activity when phosphorylated, creating a molecular switch for regulating the phosphorylation status of PPP1CA substrates and smooth muscle contraction. As to expression, detected in heart, muscle, spinal cord, hippocampus, hypothalamus, thalamus, midbrain, brain stem, cerebellum, brain cortex and olfactory bulb.

It is found in the endomembrane system. Inhibitor of the PP1 regulatory subunit PPP1CA. The protein is Protein phosphatase 1 regulatory subunit 14C (Ppp1r14c) of Mus musculus (Mouse).